The primary structure comprises 605 residues: Acetoin dehydrogenase operon transcriptional activator AcoR (605 aa).

The 226-residue stretch at 295 to 520 (VIGQSGRSQA…LFNVFERLSI (226 aa)) folds into the Sigma-54 factor interaction domain. Residues 323–330 (GETGTGKE) and 387–396 (ANQGTLFLDE) contribute to the ATP site. The H-T-H motif DNA-binding region spans 578–597 (VSQAAKISGIPRSTFYKRLK).

Its function is as follows. Acts as a transcriptional activator of the acoABCL operon encoding the acetoin dehydrogenase complex. This chain is Acetoin dehydrogenase operon transcriptional activator AcoR (acoR), found in Bacillus subtilis (strain 168).